A 146-amino-acid chain; its full sequence is Large ribosomal subunit protein uL13 (146 aa).

It belongs to the universal ribosomal protein uL13 family. As to quaternary structure, part of the 50S ribosomal subunit.

In terms of biological role, this protein is one of the early assembly proteins of the 50S ribosomal subunit, although it is not seen to bind rRNA by itself. It is important during the early stages of 50S assembly. The sequence is that of Large ribosomal subunit protein uL13 from Malacoplasma penetrans (strain HF-2) (Mycoplasma penetrans).